A 949-amino-acid polypeptide reads, in one-letter code: Lon protease homolog, mitochondrial (949 aa).

Residues 1–65 (MAASTGYVRL…VLPGGVQWRG (65 aa)) constitute a mitochondrion transit peptide. Disordered stretches follow at residues 68 to 94 (DSGN…TGEG) and 213 to 240 (EGLE…DELG). The Lon N-terminal domain maps to 112 to 359 (LPLIAITRNP…KALSLLKKEF (248 aa)). The span at 223 to 232 (KSRRKLKRGK) shows a compositional bias: basic residues. 512 to 519 (GPPGVGKT) is a binding site for ATP. Residues 748–938 (VTPPGVVMGL…RDIFPIAFPR (191 aa)) enclose the Lon proteolytic domain. Active-site residues include Ser-844 and Lys-887.

Belongs to the peptidase S16 family. Homohexamer. Organized in a ring with a central cavity. The ATP-binding and proteolytic domains (AP-domain) form a hexameric chamber, while the N-terminal domain is arranged as a trimer of dimers. DNA and RNA binding is stimulated by substrate and inhibited by ATP binding. Interacts with TWNK and mitochondrial DNA polymerase subunit POLG. As to expression, detected in liver &gt; heart &gt; kidney &gt; testis.

It localises to the mitochondrion matrix. The catalysed reaction is Hydrolysis of proteins in presence of ATP.. In terms of biological role, ATP-dependent serine protease that mediates the selective degradation of misfolded, unassembled or oxidatively damaged polypeptides as well as certain short-lived regulatory proteins in the mitochondrial matrix. Endogenous substrates include mitochondrial steroidogenic acute regulatory (StAR) protein, DELE1, helicase Twinkle (TWNK) and the large ribosomal subunit protein MRPL32/bL32m. MRPL32/bL32m is protected from degradation by LONP1 when it is bound to a nucleic acid (RNA), but TWNK is not. May also have a chaperone function in the assembly of inner membrane protein complexes. Participates in the regulation of mitochondrial gene expression and in the maintenance of the integrity of the mitochondrial genome. Binds to mitochondrial promoters and RNA in a single-stranded, site-specific, and strand-specific manner. May regulate mitochondrial DNA replication and/or gene expression using site-specific, single-stranded DNA binding to target the degradation of regulatory proteins binding to adjacent sites in mitochondrial promoters. The chain is Lon protease homolog, mitochondrial (Lonp1) from Mus musculus (Mouse).